A 3011-amino-acid polypeptide reads, in one-letter code: Genome polyprotein (3011 aa).

S2 bears the N-acetylserine; by host mark. Residues 2–23 form an interaction with STAT1 region; that stretch reads STNPKPQRKTKRNTNRRPQDVK. Residues 2-58 are interaction with EIF2AK2/PKR; sequence STNPKPQRKTKRNTNRRPQDVKFPGGGQIVGGVYLLPRRGPRLGVRATRKTSERSQP. The interaction with DDX3X stretch occupies residues 2–59; the sequence is STNPKPQRKTKRNTNRRPQDVKFPGGGQIVGGVYLLPRRGPRLGVRATRKTSERSQPR. Residues 2 to 75 are disordered; it reads STNPKPQRKT…PKARRPEGRT (74 aa). Residues 2 to 168 are Cytoplasmic-facing; it reads STNPKPQRKT…EDGVNYATGN (167 aa). 2 short sequence motifs (nuclear localization signal) span residues 5–13 and 38–43; these read PKPQRKTKR and PRRGPR. The span at 7 to 16 shows a compositional bias: basic residues; sequence PQRKTKRNTN. The segment covering 32 to 47 has biased composition (low complexity); the sequence is GGVYLLPRRGPRLGVR. The residue at position 53 (S53) is a Phosphoserine; by host. 2 consecutive short sequence motifs (nuclear localization signal) follow at residues 58–64 and 66–71; these read PRGRRQP and PKARRP. The segment covering 58–68 has biased composition (basic residues); that stretch reads PRGRRQPIPKA. S99 carries the phosphoserine; by host modification. The tract at residues 112 to 152 is important for endoplasmic reticulum and mitochondrial localization; the sequence is PRRRSRNLGKVIDTLTCGFADLMGYIPLVGAPLGGAARALA. Position 116 is a phosphoserine; by host PKA (S116). An interaction with APOA2 region spans residues 122–173; sequence VIDTLTCGFADLMGYIPLVGAPLGGAARALAHGVRVLEDGVNYATGNLPGCS. The interval 164 to 167 is important for lipid droplets localization; it reads YATG. The chain crosses the membrane as a helical span at residues 169–189; the sequence is LPGCSFSIFLLALLSCLTVPA. A propeptide spans 178 to 191 (ER anchor for the core protein, removed in mature form by host signal peptidase); it reads LLALLSCLTVPASA. Topologically, residues 190 to 358 are lumenal; sequence SAYQVRNSSG…AGAHWGVLAG (169 aa). N-linked (GlcNAc...) asparagine; by host glycans are attached at residues N196, N209, and N234. The segment at 265-296 is important for fusion; sequence LVGSATLCSALYVGDLCGSVFLVGQLFTFSPR. A glycan (N-linked (GlcNAc...) asparagine; by host) is linked at N305. A helical transmembrane segment spans residues 359–379; it reads IKYFSMVGNWAKVLVVLLLFA. Residues 380-725 lie on the Lumenal side of the membrane; the sequence is GVDAETHVTG…WEYVVLLFLL (346 aa). An HVR1 region spans residues 385-411; it reads THVTGGNAGRTTAGLVGLLTPGAKQNI. N417, N423, N430, and N448 each carry an N-linked (GlcNAc...) (high mannose) asparagine; by host glycan. 4 disulfides stabilise this stretch: C429-C552, C452-C459, C486-C494, and C503-C508. The HVR2 stretch occupies residues 474-479; sequence YANGSG. The N-linked (GlcNAc...) (high mannose) asparagine; by host glycan is linked to N476. A CD81-binding 1 region spans residues 480 to 493; sequence LDERPYCWHYPPRP. 2 N-linked (GlcNAc...) (high mannose) asparagine; by host glycosylation sites follow: N532 and N540. Positions 544–551 are CD81-binding 2; sequence PPLGNWFG. Residue N556 is glycosylated (N-linked (GlcNAc...) (high mannose) asparagine; by host). Cysteines 564 and 569 form a disulfide. N-linked (GlcNAc...) (high mannose) asparagine; by host glycosylation is present at N576. 3 cysteine pairs are disulfide-bonded: C581–C585, C597–C620, and C607–C644. 2 N-linked (GlcNAc...) (high mannose) asparagine; by host glycosylation sites follow: N623 and N645. A disulfide bridge connects residues C652 and C677. An EIF2AK2/eIF2-alpha phosphorylation homology domain (PePHD) region spans residues 660–671; that stretch reads SELSPLLLSTTQ. The chain crosses the membrane as a helical span at residues 726-746; it reads LADARVCSCLWMMLLISQAEA. Topologically, residues 747–757 are lumenal; the sequence is ALENLVILNAA. A helical transmembrane segment spans residues 758-778; it reads SLAGTHGLVSFLVFFCFAWYL. Over 779–781 the chain is Cytoplasmic; sequence KGR. A helical transmembrane segment spans residues 782-803; sequence WVPGAVYALYGMWPLLLLLLAL. Residues 804–813 are Lumenal-facing; sequence PQRAYALDTE. The chain crosses the membrane as a helical span at residues 814 to 834; sequence VAASCGGVVLVGLMALTLSPY. At 835 to 838 the chain is on the cytoplasmic side; sequence YKRY. The chain crosses the membrane as a helical span at residues 839–859; that stretch reads ISWCMWWLQYFLTRVEAQLHV. Residues 860 to 881 are Lumenal-facing; it reads WVPPLNVRGGRDAVILLTCVVH. A helical transmembrane segment spans residues 882–902; that stretch reads PALVFDITKLLLAIFGPLWIL. The Peptidase C18 domain maps to 899–1026; that stretch reads LWILQASLLK…GMVSKGWRLL (128 aa). Residues 903 to 1657 are Cytoplasmic-facing; that stretch reads QASLLKVPYF…CMSADLEVVT (755 aa). The tract at residues 904 to 1206 is protease NS2-3; that stretch reads ASLLKVPYFV…PVENLETTMR (303 aa). A lipid anchor (S-palmitoyl cysteine; by host) is attached at C922. The interaction with host SCPS1 stretch occupies residues 929–949; that stretch reads AGGHYVQMAIIKLGALTGTCV. Residues H952, E972, and C993 each act as for protease NS2 activity; shared with dimeric partner in the active site. Residues 1027–1208 form the Peptidase S29 domain; sequence APITAYAQQT…ENLETTMRSP (182 aa). Residues H1083 and D1107 each act as charge relay system; for serine protease NS3 activity in the active site. Zn(2+)-binding residues include C1123 and C1125. S1165 functions as the Charge relay system; for serine protease NS3 activity in the catalytic mechanism. Zn(2+) is bound by residues C1171 and H1175. The Helicase ATP-binding domain maps to 1217-1369; it reads PAVPQSFQVA…PNIEEVALST (153 aa). Residue 1230-1237 participates in ATP binding; the sequence is APTGSGKS. Residues S1237 and E1317 each contribute to the Mg(2+) site. The DECH box signature appears at 1316 to 1319; it reads DECH. The RNA-binding stretch occupies residues 1486–1497; it reads QRRGRTGRGKPG. Residues 1658–1678 traverse the membrane as a helical segment; the sequence is STWVLVGGVLAALAAYCLSTG. The tract at residues 1679 to 1690 is NS3-binding; that stretch reads CVVIVGRIVLSG. The Cytoplasmic portion of the chain corresponds to 1679-1805; it reads CVVIVGRIVL…AVTSPLTTGQ (127 aa). Residues 1806 to 1824 form a helical membrane-spanning segment; the sequence is TLLFNILGGWVAAQLAAPG. Residues 1825 to 1828 are Lumenal-facing; the sequence is AATA. The helical transmembrane segment at 1829-1849 threads the bilayer; the sequence is FVGAGLAGAALDSVGLGKVLV. The interval 1833 to 1861 is glycine zipper; that stretch reads GLAGAALDSVGLGKVLVDILAGYGAGVAG. D1850 is a topological domain (cytoplasmic). A helical membrane pass occupies residues 1851–1871; that stretch reads ILAGYGAGVAGALVAFKIMSG. Over 1872–1881 the chain is Lumenal; it reads EVPSTEDLVN. Residues 1882 to 1902 form a helical membrane-spanning segment; the sequence is LLPAILSPGALAVGVVFASIL. Residues 1903–1972 are Cytoplasmic-facing; that stretch reads RRRVGPGEGA…WISSECTTPC (70 aa). C1968 carries S-palmitoyl cysteine; by host lipidation. Residue C1972 is the site of S-palmitoyl cysteine; by host; partial attachment. The stretch at 1973-2003 is an intramembrane region; it reads SGSWLRDIWDWICEVLSDFKTWLKAKLMPQL. The segment at 1978–1998 is membrane-binding; the sequence is RDIWDWICEVLSDFKTWLKAK. The Cytoplasmic portion of the chain corresponds to 2004–2990; the sequence is PGIPFVSCQR…YHSVSHARPR (987 aa). The D1; RNA-binding stretch occupies residues 2005–2221; the sequence is GIPFVSCQRG…KATCTANHDS (217 aa). Positions 2011, 2029, 2031, and 2052 each coordinate Zn(2+). Residues 2120-2208 form an FKBP8-binding region; sequence EFFTELDGVR…ASSSASQLSA (89 aa). The tract at residues 2120–2332 is transcriptional activation; that stretch reads EFFTELDGVR…PVPPPRKKRT (213 aa). The interaction with non-structural protein 4A stretch occupies residues 2135 to 2139; it reads PPCKP. The segment at 2189–2441 is interaction with host SKP2; it reads RLARGSPPSM…TPCAAEEQKL (253 aa). S2194 bears the Phosphoserine; by host; in p56 mark. S2197 carries the post-translational modification Phosphoserine; by host; in p58. Residue S2201 is modified to Phosphoserine; by host; in p56 and p58, regulates intracellular NS5A distribution. A phosphoserine; by host; in p58 mark is found at S2204, S2207, and S2210. Positions 2210–2249 are ISDR; it reads SLKATCTANHDSPDAELIEANLLWRQEMGGNITRVESENK. The tract at residues 2210–2275 is interaction with EIF2AK2/PKR; the sequence is SLKATCTANH…REVSVPAEIL (66 aa). The segment at 2223 to 2315 is D2; that stretch reads DAELIEANLL…YEPPVVHGCP (93 aa). Residues 2224-2315 are disordered; the sequence is AELIEANLLW…YEPPVVHGCP (92 aa). The NS4B-binding stretch occupies residues 2249–2306; that stretch reads KVVILDSFDPLVAEEDEREVSVPAEILRKSRRFAPALPVWARPDYNPLLVETWKKPDY. The interval 2281–2297 is interaction with human PPIA/CYPA; it reads FAPALPVWARPDYNPLL. The segment covering 2315–2326 has biased composition (pro residues); sequence PLPPPRSPPVPP. Phosphoserine; by host is present on S2321. Residues 2322–2325 carry the SH3-binding motif; it reads PPVP. A Nuclear localization signal motif is present at residues 2326–2334; that stretch reads PPRKKRTVV. The tract at residues 2329–2420 is D3; that stretch reads KKRTVVLTES…GADTEDVVCC (92 aa). Residues 2332-2441 form an interaction with host IFI27 region; it reads TVVLTESTLP…TPCAAEEQKL (110 aa). The interval 2346–2409 is disordered; it reads ELATKSFGSS…LSDGSWSTVS (64 aa). The span at 2349–2369 shows a compositional bias: low complexity; it reads TKSFGSSSTSGITGDNTTTSS. K2350 is covalently cross-linked (Glycyl lysine isopeptide (Lys-Gly) (interchain with G-Cter in ubiquitin)). Residues 2354–2377 form a V3 region; sequence SSSTSGITGDNTTTSSEPAPSGCP. Residues 2367–2417 form an interaction with host VAPB region; the sequence is TSSEPAPSGCPPDSDVESYSSMPPLEGEPGDPDLSDGSWSTVSSGADTEDV. Residues S2449 and S2462 each carry the phosphoserine; by host modification. Residues 2634-2752 form the RdRp catalytic domain; it reads PMGLSYDTRC…ICESAGVQED (119 aa). 3 residues coordinate Mg(2+): D2640, D2738, and D2739. A helical membrane pass occupies residues 2991 to 3011; the sequence is WFWFCLLLLAAGVGIYLLPNR.

It belongs to the hepacivirus polyprotein family. In terms of assembly, homooligomer. Interacts with E1 (via C-terminus). Interacts with the non-structural protein 5A. Interacts (via N-terminus) with host STAT1 (via SH2 domain); this interaction results in decreased STAT1 phosphorylation and ubiquitin-mediated proteasome-dependent STAT1 degradation, leading to decreased IFN-stimulated gene transcription. Interacts with host STAT3; this interaction constitutively activates STAT3. Associates with host LTBR receptor. Interacts with host TNFRSF1A receptor and possibly induces apoptosis. Interacts with host HNRPK. Interacts with host YWHAE. Interacts with host UBE3A/E6AP. Interacts with host DDX3X. Interacts with host APOA2. Interacts with host RXRA protein. Interacts with host SP110 isoform 3/Sp110b; this interaction sequesters the transcriptional corepressor SP110 away from the nucleus. Interacts with host CREB3 nuclear transcription protein; this interaction triggers cell transformation. Interacts with host ACY3. Interacts with host C1QR1. Interacts with host RBM24; this interaction, which enhances the interaction of the mature core protein with 5'-UTR, may inhibit viral translation and favor replication. Interacts (via N-terminus) with host EIF2AK2/PKR (via N-terminus); this interaction induces the autophosphorylation of EIF2AK2. Part of the viral assembly initiation complex composed of NS2, E1, E2, NS3, NS4A, NS5A and the mature core protein. As to quaternary structure, forms a heterodimer with envelope glycoprotein E2. Interacts with mature core protein. Interacts with protease NS2. The heterodimer E1/E2 interacts with host CLDN1; this interaction plays a role in viral entry into host cell. Interacts with host SPSB2 (via C-terminus). Part of the viral assembly initiation complex composed of NS2, E1, E2, NS3, NS4A, NS5A and the mature core protein. Interacts with host NEURL3; this interaction prevents E1 binding to glycoprotein E2. Forms a heterodimer with envelope glycoprotein E1. Interacts with host CD81 and SCARB1 receptors; these interactions play a role in viral entry into host cell. Interacts with host EIF2AK2/PKR; this interaction inhibits EIF2AK2 and probably allows the virus to evade the innate immune response. Interacts with host CD209/DC-SIGN and CLEC4M/DC-SIGNR. Interact with host SPCS1; this interaction is essential for viral particle assembly. Interacts with protease NS2. The heterodimer E1/E2 interacts with host CLDN1; this interaction plays a role in viral entry into host cell. Part of the viral assembly initiation complex composed of NS2, E1, E2, NS3, NS4A, NS5A and the mature core protein. Interacts with host SLC3A2/4F2hc; the interaction may facilitate viral entry into host cell. Interacts with human PLSCR1. In terms of assembly, homohexamer. Homoheptamer. Interacts with protease NS2. As to quaternary structure, homodimer. Interacts with host SPCS1; this interaction is essential for viral particle assembly. Interacts with envelope glycoprotein E1. Interacts with envelope glycoprotein E2. Interacts with viroporin p7. Interacts with serine protease/helicase NS3. Part of the replication complex composed of NS2, NS3, NS4A, NS4B, NS5A and the RNA-directed RNA polymerase embedded in an ER-derived membranous web. Part of the viral assembly initiation complex composed of NS2, E1, E2, NS3, NS4A, NS5A and the mature core protein. Interacts with protease NS2. Interacts with non-structural protein 4A; this interaction stabilizes the folding of NS3 serine protease. NS3-NS4A interaction is essential for NS3 activation and allows membrane anchorage of the latter. NS3/NS4A complex also prevents phosphorylation of host IRF3, thus preventing the establishment of dsRNA induced antiviral state. Interacts with host MAVS; this interaction leads to the cleavage and inhibition of host MAVS. Interacts with host TICAM1; this interaction leads to the cleavage and inhibition of host TICAM1. Interacts with host TANK-binding kinase/TBK1; this interaction results in the inhibition of the association between TBK1 and IRF3, which leads to the inhibition of IRF3 activation. Interacts with host RBM24. Part of the replication complex composed of NS2, NS3, NS4A, NS4B, NS5A and the RNA-directed RNA polymerase embedded in an ER-derived membranous web. Part of the viral assembly initiation complex composed of NS2, E1, E2, NS3, NS4A, NS5A and the mature core protein. In terms of assembly, interacts with NS3 serine protease; this interaction stabilizes the folding of NS3 serine protease. NS3-NS4A interaction is essential for NS3 activation and allows membrane anchorage of the latter. Interacts with non-structural protein 5A (via N-terminus). Part of the replication complex composed of NS2, NS3, NS4A, NS4B, NS5A and the RNA-directed RNA polymerase embedded in an ER-derived membranous web. Part of the viral assembly initiation complex composed of NS2, E1, E2, NS3, NS4A, NS5A and the mature core protein. As to quaternary structure, homomultimer. Interacts with non-structural protein NS5A. Interacts with host PLA2G4C; this interaction likely initiates the recruitment of replication complexes to lipid droplets. Interacts with host STING; this interaction disrupts the interaction between STING and TBK1 thereby suppressing the interferon signaling. Interacts with host METTL22; this interaction may promote the recruitment of NS4B in the proximity of lipid droplet. Part of the replication complex composed of NS2, NS3, NS4A, NS4B, NS5A and the RNA-directed RNA polymerase embedded in an ER-derived membranous web. Monomer. Homodimer; dimerization is required for RNA-binding. Interacts with the mature core protein. Interacts (via N-terminus) with non-structural protein 4A. Interacts with non-structural protein 4B. Interacts (via region D2) with RNA-directed RNA polymerase. Part of the viral assembly initiation complex composed of NS2, E1, E2, NS3, NS4A, NS5A and the mature core protein. Part of the replication complex composed of NS2, NS3, NS4A, NS4B, NS5A and the RNA-directed RNA polymerase embedded in an ER-derived membranous web. Interacts with host GRB2. Interacts with host BIN1. Interacts with host PIK3R1. Interacts with host SRCAP. Interacts with host FKBP8. Interacts (via C-terminus) with host VAPB (via MSP domain). Interacts with host EIF2AK2/PKR; this interaction leads to disruption of EIF2AK2 dimerization by NS5A and probably allows the virus to evade the innate immune response. Interacts (via N-terminus) with host PACSIN2 (via N-terminus); this interaction attenuates protein kinase C alpha-mediated phosphorylation of PACSIN2 by disrupting the interaction between PACSIN2 and PRKCA. Interacts (via N-terminus) with host SRC kinase (via SH2 domain). Interacts with most Src-family kinases. Interacts with host IFI27 and SKP2; promotes the ubiquitin-mediated proteasomal degradation of NS5A. Interacts with host GPS2. Interacts with host TNFRSF21; this interaction allows the modulation by the virus of JNK, p38 MAPK, STAT3, and Akt signaling pathways in a DR6-dependent manner. Interacts (via N-terminus) with host CIDEB (via N-terminus); this interaction seems to regulate the association of HCV particles with APOE. Interacts with host CHKA/Choline Kinase-alpha; CHKA bridges host PI4KA and NS5A and potentiates NS5A-stimulated PI4KA activity, which then facilitates the targeting of the ternary complex to the ER for viral replication. Interacts with host SPSB2 (via C-terminus); this interaction targets NS5A for ubiquitination and degradation. Interacts with host RAB18; this interaction may promote the association of NS5A and other replicase components with lipid droplets. Interacts (via region D2) with host PPIA/CYPA; the interaction stimulates RNA-binding ability of NS5A and is dependent on the peptidyl-prolyl cis-trans isomerase activity of PPIA/CYPA. Interacts with host TRIM14; this interaction induces the degradation of NS5A. In terms of assembly, homooligomer. Interacts with non-structural protein 5A. Interacts with host VAPB. Interacts with host PRK2/PKN2. Interacts with host HNRNPA1 and SEPT6; these interactions facilitate the viral replication. Part of the replication complex composed of NS2, NS3, NS4A, NS4B, NS5A and the RNA-directed RNA polymerase embedded in an ER-derived membranous web. The cofactor is Zn(2+). Requires Mg(2+) as cofactor. Specific enzymatic cleavages in vivo yield mature proteins. The structural proteins, core, E1, E2 and p7 are produced by proteolytic processing by host signal peptidases. The core protein precursor is synthesized as a 23 kDa, which is retained in the ER membrane through the hydrophobic signal peptide. Cleavage by the signal peptidase releases the 21 kDa mature core protein. The cleavage of the core protein precursor occurs between aminoacids 176 and 188 but the exact cleavage site is not known. Some degraded forms of the core protein appear as well during the course of infection. The other proteins (p7, NS2, NS3, NS4A, NS4B, NS5A and NS5B) are cleaved by the viral proteases. Autoprocessing between NS2 and NS3 is mediated by the NS2 cysteine protease catalytic domain and regulated by the NS3 N-terminal domain. Post-translationally, phosphorylated by host PKC and PKA. In terms of processing, ubiquitinated; mediated by UBE3A and leading to core protein subsequent proteasomal degradation. Highly N-glycosylated. Post-translationally, palmitoylation is required for NS2/3 autoprocessing and E2 recruitment to membranes. In terms of processing, palmitoylated. This modification may play a role in its polymerization or in protein-protein interactions. Cleaved by host caspases which are probably activated by the viral infection. Post-translationally, ubiquitinated. Ubiquitination, most probably at Lys-2350, mediated by host IFI27 and SKP2 leads to proteasomal degradation, restricting viral infection. Ubiquitination by host TRIM22 leads to interruption of viral replication. In terms of processing, phosphorylated on serines in a basal form termed p56. p58 is a hyperphosphorylated form of p56. p56 and p58 coexist in the cell in roughly equivalent amounts. Hyperphosphorylation is dependent on the presence of NS4A. Host CSNK1A1/CKI-alpha, PI4KA or RPS6KB1 kinases may be responsible for NS5A phosphorylation. Phosphorylated NS5A is involved in viral replication. Tyrosine phosphorylation is essential for the interaction with host SRC. Post-translationally, the N-terminus is phosphorylated by host PRK2/PKN2.

It localises to the host endoplasmic reticulum membrane. It is found in the host mitochondrion membrane. Its subcellular location is the virion. The protein resides in the host cytoplasm. The protein localises to the host nucleus. It localises to the host lipid droplet. It is found in the virion membrane. Its subcellular location is the host mitochondrion. The protein resides in the host cell membrane. The protein localises to the host perinuclear region. The catalysed reaction is Hydrolysis of four peptide bonds in the viral precursor polyprotein, commonly with Asp or Glu in the P6 position, Cys or Thr in P1 and Ser or Ala in P1'.. It catalyses the reaction a ribonucleoside 5'-triphosphate + H2O = a ribonucleoside 5'-diphosphate + phosphate + H(+). It carries out the reaction ATP + H2O = ADP + phosphate + H(+). The enzyme catalyses RNA(n) + a ribonucleoside 5'-triphosphate = RNA(n+1) + diphosphate. Inhibited by the antiviral drug hexamethylene amiloride. Inhibited by amantadine. Inhibition by amantadine appears to be genotype-dependent. Also inhibited by long-alkyl-chain iminosugar derivatives. With respect to regulation, activity is up-regulated by PRK2/PKN2-mediated phosphorylation. In terms of biological role, packages viral RNA to form a viral nucleocapsid, and promotes virion budding. Participates in the viral particle production as a result of its interaction with the non-structural protein 5A. Binds RNA and may function as a RNA chaperone to induce the RNA structural rearrangements taking place during virus replication. Modulates viral translation initiation by interacting with viral IRES and 40S ribosomal subunit. Affects various cell signaling pathways, host immunity and lipid metabolism. Prevents the establishment of cellular antiviral state by blocking the interferon-alpha/beta (IFN-alpha/beta) and IFN-gamma signaling pathways and by blocking the formation of phosphorylated STAT1 and promoting ubiquitin-mediated proteasome-dependent degradation of STAT1. Activates STAT3 leading to cellular transformation. Regulates the activity of cellular genes, including c-myc and c-fos. May repress the promoter of p53, and sequester CREB3 and SP110 isoform 3/Sp110b in the cytoplasm. Represses cell cycle negative regulating factor CDKN1A, thereby interrupting an important check point of normal cell cycle regulation. Targets transcription factors involved in the regulation of inflammatory responses and in the immune response: suppresses NF-kappa-B activation, and activates AP-1. Binds to dendritic cells (DCs) via C1QR1, resulting in down-regulation of T-lymphocytes proliferation. Alters lipid metabolism by interacting with hepatocellular proteins involved in lipid accumulation and storage. Induces up-regulation of FAS promoter activity, and thereby contributes to the increased triglyceride accumulation in hepatocytes (steatosis). Functionally, forms a heterodimer with envelope glycoprotein E2, which mediates virus attachment to the host cell, virion internalization through clathrin-dependent endocytosis and fusion with host membrane. Fusion with the host cell is most likely mediated by both E1 and E2, through conformational rearrangements of the heterodimer required for fusion rather than a classical class II fusion mechanism. E1/E2 heterodimer binds host apolipoproteins such as APOB and APOE thereby forming a lipo-viro-particle (LVP). APOE associated to the LVP allows the initial virus attachment to cell surface receptors such as the heparan sulfate proteoglycans (HSPGs), syndecan-1 (SDC1), syndecan-1 (SDC2), the low-density lipoprotein receptor (LDLR) and scavenger receptor class B type I (SCARB1). The cholesterol transfer activity of SCARB1 allows E2 exposure and binding of E2 to SCARB1 and the tetraspanin CD81. E1/E2 heterodimer binding on CD81 activates the epithelial growth factor receptor (EGFR) signaling pathway. Diffusion of the complex E1/E2-EGFR-SCARB1-CD81 to the cell lateral membrane allows further interaction with Claudin 1 (CLDN1) and occludin (OCLN) to finally trigger HCV entry. Its function is as follows. Forms a heterodimer with envelope glycoprotein E1, which mediates virus attachment to the host cell, virion internalization through clathrin-dependent endocytosis and fusion with host membrane. Fusion with the host cell is most likely mediated by both E1 and E2, through conformational rearrangements of the heterodimer required for fusion rather than a classical class II fusion mechanism. The interaction between E2 and host apolipoprotein E/APOE allows the proper assembly, maturation and infectivity of the viral particles. This interaction is probably promoted via the up-regulation of cellular autophagy by the virus. E1/E2 heterodimer binds host apolipoproteins such as APOB and APOE thereby forming a lipo-viro-particle (LVP). APOE associated to the LVP allows the initial virus attachment to cell surface receptors such as the heparan sulfate proteoglycans (HSPGs), syndecan-1 (SDC1), syndecan-1 (SDC2), the low-density lipoprotein receptor (LDLR) and scavenger receptor class B type I (SCARB1). The cholesterol transfer activity of SCARB1 allows E2 exposure and binding of E2 to SCARB1 and the tetraspanin CD81. E1/E2 heterodimer binding on CD81 activates the epithelial growth factor receptor (EGFR) signaling pathway. Diffusion of the complex E1/E2-EGFR-SCARB1-CD81 to the cell lateral membrane allows further interaction with Claudin 1 (CLDN1) and occludin (OCLN) to finally trigger HCV entry. Inhibits host EIF2AK2/PKR activation, preventing the establishment of an antiviral state. Viral ligand for CD209/DC-SIGN and CLEC4M/DC-SIGNR, which are respectively found on DCs, and on liver sinusoidal endothelial cells and macrophage-like cells of lymph node sinuses. These interactions allow the capture of circulating HCV particles by these cells and subsequent facilitated transmission to permissive cells such as hepatocytes and lymphocyte subpopulations. The interaction between E2 and host amino acid transporter complex formed by SLC3A2 and SLC7A5/LAT1 may facilitate viral entry into host cell. Ion channel protein that acts as a viroporin and plays an essential role in the assembly, envelopment and secretion of viral particles. Participates in virus envelopment by coordinating the encounter between NS5A and NS2-based assembly sites loaded with E1/E2 heterodimer, which subsequently leads to nucleocapsid envelopment. Creates a pore in acidic organelles and releases Ca(2+) and H(+) in the cytoplasm of infected cells, leading to a productive viral infection. High levels of cytoplasmic Ca(2+) may trigger membrane trafficking and transport of viral ER-associated proteins to viroplasms, sites of viral genome replication. The release of Ca(2+) may also activate the inflamasome leading to chronic inflammation. Targets also host mitochondria and induces mitochondrial depolarization. In addition of its role as a viroporin, acts as a lipid raft adhesion factor. In terms of biological role, cysteine protease required for the proteolytic auto-cleavage between the non-structural proteins NS2 and NS3. The N-terminus of NS3 is required for the function of NS2 protease (active region NS2-3). Promotes the initiation of viral particle assembly by mediating the interaction between structural and non-structural proteins. Functionally, displays three enzymatic activities: serine protease with a chymotrypsin-like fold, NTPase and RNA helicase. NS3 serine protease, in association with NS4A, is responsible for the cleavages of NS3-NS4A, NS4A-NS4B, NS4B-NS5A and NS5A-NS5B. The NS3/NS4A complex prevents phosphorylation of host IRF3, thus preventing the establishment of dsRNA induced antiviral state. The NS3/NS4A complex induces host amino acid transporter component SLC3A2, thus contributing to HCV propagation. NS3 RNA helicase binds to RNA and unwinds both dsDNA and dsRNA in the 3' to 5' direction, and likely resolves RNA complicated stable secondary structures in the template strand. Binds a single ATP and catalyzes the unzipping of a single base pair of dsRNA. Inhibits host antiviral proteins TBK1 and IRF3 thereby preventing the establishment of an antiviral state. Cleaves host MAVS/CARDIF thereby preventing the establishment of an antiviral state. Cleaves host TICAM1/TRIF, thereby disrupting TLR3 signaling and preventing the establishment of an antiviral state. Its function is as follows. Peptide cofactor which forms a non-covalent complex with the N-terminal of NS3 serine protease. The NS3/NS4A complex prevents phosphorylation of host IRF3, thus preventing the establishment of dsRNA induced antiviral state. The NS3/NS4A complex induces host amino acid transporter component SLC3A2, thus contributing to HCV propagation. Induces a specific membrane alteration that serves as a scaffold for the virus replication complex. This membrane alteration gives rise to the so-called ER-derived membranous web that contains the replication complex. NS4B self-interaction contributes to its function in membranous web formation. Promotes host TRIF protein degradation in a CASP8-dependent manner thereby inhibiting host TLR3-mediated interferon signaling. Disrupts the interaction between STING and TBK1 contributing to the inhibition of interferon signaling. In terms of biological role, phosphorylated protein that is indispensable for viral replication and assembly. Both hypo- and hyperphosphorylated states are required for the viral life cycle. The hyperphosphorylated form of NS5A is an inhibitor of viral replication. Involved in RNA-binding and especially in binding to the viral genome. Zinc is essential for RNA-binding. Participates in the viral particle production as a result of its interaction with the viral mature core protein. Its interaction with host VAPB may target the viral replication complex to vesicles. Down-regulates viral IRES translation initiation. Mediates interferon resistance, presumably by interacting with and inhibiting host EIF2AK2/PKR. Prevents BIN1-induced apoptosis. Acts as a transcriptional activator of some host genes important for viral replication when localized in the nucleus. Via the interaction with host PACSIN2, modulates lipid droplet formation in order to promote virion assembly. Modulates TNFRSF21/DR6 signaling pathway for viral propagation. Functionally, RNA-dependent RNA polymerase that performs primer-template recognition and RNA synthesis during viral replication. Initiates RNA transcription/replication at a flavin adenine dinucleotide (FAD), resulting in a 5'- FAD cap on viral RNAs. In this way, recognition of viral 5' RNA by host pattern recognition receptors can be bypassed, thereby evading activation of antiviral pathways. The polypeptide is Genome polyprotein (Homo sapiens (Human)).